Reading from the N-terminus, the 485-residue chain is Glutamyl-tRNA(Gln) amidotransferase subunit A (485 aa).

Residues Lys79 and Ser154 each act as charge relay system in the active site. Ser178 serves as the catalytic Acyl-ester intermediate.

The protein belongs to the amidase family. GatA subfamily. Heterotrimer of A, B and C subunits.

The enzyme catalyses L-glutamyl-tRNA(Gln) + L-glutamine + ATP + H2O = L-glutaminyl-tRNA(Gln) + L-glutamate + ADP + phosphate + H(+). Functionally, allows the formation of correctly charged Gln-tRNA(Gln) through the transamidation of misacylated Glu-tRNA(Gln) in organisms which lack glutaminyl-tRNA synthetase. The reaction takes place in the presence of glutamine and ATP through an activated gamma-phospho-Glu-tRNA(Gln). The polypeptide is Glutamyl-tRNA(Gln) amidotransferase subunit A (Clostridium botulinum (strain Loch Maree / Type A3)).